A 205-amino-acid polypeptide reads, in one-letter code: Imidazole glycerol phosphate synthase subunit HisH (205 aa).

One can recognise a Glutamine amidotransferase type-1 domain in the interval 1-205 (MVGIVNYNIG…RILKNFCEIG (205 aa)). C79 acts as the Nucleophile in catalysis. Catalysis depends on residues H186 and E188.

As to quaternary structure, heterodimer of HisH and HisF.

Its subcellular location is the cytoplasm. It carries out the reaction 5-[(5-phospho-1-deoxy-D-ribulos-1-ylimino)methylamino]-1-(5-phospho-beta-D-ribosyl)imidazole-4-carboxamide + L-glutamine = D-erythro-1-(imidazol-4-yl)glycerol 3-phosphate + 5-amino-1-(5-phospho-beta-D-ribosyl)imidazole-4-carboxamide + L-glutamate + H(+). The enzyme catalyses L-glutamine + H2O = L-glutamate + NH4(+). Its pathway is amino-acid biosynthesis; L-histidine biosynthesis; L-histidine from 5-phospho-alpha-D-ribose 1-diphosphate: step 5/9. IGPS catalyzes the conversion of PRFAR and glutamine to IGP, AICAR and glutamate. The HisH subunit catalyzes the hydrolysis of glutamine to glutamate and ammonia as part of the synthesis of IGP and AICAR. The resulting ammonia molecule is channeled to the active site of HisF. The polypeptide is Imidazole glycerol phosphate synthase subunit HisH (Wolinella succinogenes (strain ATCC 29543 / DSM 1740 / CCUG 13145 / JCM 31913 / LMG 7466 / NCTC 11488 / FDC 602W) (Vibrio succinogenes)).